Here is a 493-residue protein sequence, read N- to C-terminus: NADH-ubiquinone oxidoreductase 51 kDa subunit, mitochondrial (493 aa).

A mitochondrion-targeting transit peptide spans 1-27 (MLSRTAAPTKASARTLSRAAAEQCRTF). Position 96 to 105 (96 to 105 (GRGGAGFPSG)) interacts with NAD(+). Residue 212-259 (GAGAYVCGEETSLIESLEGKPGKPRLKPPFPAAVGLFGCPSTVANVET) participates in FMN binding. Residues Cys-391, Cys-394, Cys-397, and Cys-437 each coordinate [4Fe-4S] cluster.

Belongs to the complex I 51 kDa subunit family. Complex I is composed of about 40 different subunits. This is a component of the flavoprotein-sulfur (FP) fragment of the enzyme. FMN serves as cofactor. [4Fe-4S] cluster is required as a cofactor.

Its subcellular location is the mitochondrion inner membrane. The catalysed reaction is a ubiquinone + NADH + 5 H(+)(in) = a ubiquinol + NAD(+) + 4 H(+)(out). Core subunit of the mitochondrial membrane respiratory chain NADH dehydrogenase (Complex I) that is believed to belong to the minimal assembly required for catalysis. Complex I functions in the transfer of electrons from NADH to the respiratory chain. The immediate electron acceptor for the enzyme is believed to be ubiquinone. The polypeptide is NADH-ubiquinone oxidoreductase 51 kDa subunit, mitochondrial (nuo-51) (Neurospora crassa (strain ATCC 24698 / 74-OR23-1A / CBS 708.71 / DSM 1257 / FGSC 987)).